Here is a 230-residue protein sequence, read N- to C-terminus: Potassium/proton antiporter CemA (230 aa).

4 helical membrane passes run 7 to 27 (LPSLLYLVFIVLLPWGVSSSF), 107 to 127 (ILHFSTNIICLAILSGSFFLG), 145 to 165 (LNDSIKAFFILLVTDFFVGFH), and 181 to 201 (FGWAPNELIFTIFVCSFPVIL).

The protein belongs to the CemA family.

The protein resides in the plastid. It is found in the chloroplast inner membrane. It catalyses the reaction K(+)(in) + H(+)(out) = K(+)(out) + H(+)(in). In terms of biological role, contributes to K(+)/H(+) antiport activity by supporting proton efflux to control proton extrusion and homeostasis in chloroplasts in a light-dependent manner to modulate photosynthesis. Prevents excessive induction of non-photochemical quenching (NPQ) under continuous-light conditions. Indirectly promotes efficient inorganic carbon uptake into chloroplasts. The chain is Potassium/proton antiporter CemA from Triticum aestivum (Wheat).